The following is a 166-amino-acid chain: NAD(P)H-quinone oxidoreductase subunit I, chloroplastic (166 aa).

4Fe-4S ferredoxin-type domains are found at residues 55–84 and 95–124; these read GRIH…VDWK and LNYS…MTEE. [4Fe-4S] cluster contacts are provided by Cys-64, Cys-67, Cys-70, Cys-74, Cys-104, Cys-107, Cys-110, and Cys-114.

Belongs to the complex I 23 kDa subunit family. NDH is composed of at least 16 different subunits, 5 of which are encoded in the nucleus. [4Fe-4S] cluster is required as a cofactor.

The protein resides in the plastid. The protein localises to the chloroplast thylakoid membrane. It carries out the reaction a plastoquinone + NADH + (n+1) H(+)(in) = a plastoquinol + NAD(+) + n H(+)(out). It catalyses the reaction a plastoquinone + NADPH + (n+1) H(+)(in) = a plastoquinol + NADP(+) + n H(+)(out). In terms of biological role, NDH shuttles electrons from NAD(P)H:plastoquinone, via FMN and iron-sulfur (Fe-S) centers, to quinones in the photosynthetic chain and possibly in a chloroplast respiratory chain. The immediate electron acceptor for the enzyme in this species is believed to be plastoquinone. Couples the redox reaction to proton translocation, and thus conserves the redox energy in a proton gradient. The chain is NAD(P)H-quinone oxidoreductase subunit I, chloroplastic from Perymeniopsis ovalifolia.